A 290-amino-acid chain; its full sequence is Glycine-N-acyltransferase-like protein 3 (290 aa).

It catalyses the reaction an acyl-CoA + glycine = an N-acylglycine + CoA + H(+). It carries out the reaction (9Z)-octadecenoyl-CoA + glycine = N-(9Z-octadecenoyl)glycine + CoA + H(+). The catalysed reaction is hexadecanoyl-CoA + glycine = N-hexadecanoylglycine + CoA + H(+). It participates in lipid metabolism. Catalyzes the conjugation of long-chain fatty acyl-CoA thioester and glycine to produce long-chain N-(fatty acyl)glycine, an intermediate in the primary fatty acid amide biosynthetic pathway. This chain is Glycine-N-acyltransferase-like protein 3, found in Mus musculus (Mouse).